Reading from the N-terminus, the 514-residue chain is ATP synthase subunit alpha 2 (514 aa).

170-177 (GDRQTGKT) serves as a coordination point for ATP.

Belongs to the ATPase alpha/beta chains family. F-type ATPases have 2 components, CF(1) - the catalytic core - and CF(0) - the membrane proton channel. CF(1) has five subunits: alpha(3), beta(3), gamma(1), delta(1), epsilon(1). CF(0) has three main subunits: a(1), b(2) and c(9-12). The alpha and beta chains form an alternating ring which encloses part of the gamma chain. CF(1) is attached to CF(0) by a central stalk formed by the gamma and epsilon chains, while a peripheral stalk is formed by the delta and b chains.

Its subcellular location is the cell inner membrane. It carries out the reaction ATP + H2O + 4 H(+)(in) = ADP + phosphate + 5 H(+)(out). Functionally, produces ATP from ADP in the presence of a proton gradient across the membrane. The alpha chain is a regulatory subunit. This Hahella chejuensis (strain KCTC 2396) protein is ATP synthase subunit alpha 2.